The primary structure comprises 204 residues: U1 small nuclear ribonucleoprotein C (204 aa).

The segment at 4 to 36 adopts a Matrin-type zinc-finger fold; the sequence is FFCDYCDVYLTHDSMSVRKAHNSGRNHLRNVVD. A disordered region spans residues 65–204; the sequence is ANPMLPQNQP…GAGAPGHEKR (140 aa). Composition is skewed to pro residues over residues 77-154 and 166-192; these read GFPP…PGAP and APPP…PGFA.

This sequence belongs to the U1 small nuclear ribonucleoprotein C family. In terms of assembly, U1 snRNP is composed of the 7 core Sm proteins B/B', D1, D2, D3, E, F and G that assemble in a heptameric protein ring on the Sm site of the small nuclear RNA to form the core snRNP, and at least 3 U1 snRNP-specific proteins U1-70K, U1-A and U1-C. U1-C interacts with U1 snRNA and the 5' splice-site region of the pre-mRNA.

The protein resides in the nucleus. Its function is as follows. Component of the spliceosomal U1 snRNP, which is essential for recognition of the pre-mRNA 5' splice-site and the subsequent assembly of the spliceosome. U1-C is directly involved in initial 5' splice-site recognition for both constitutive and regulated alternative splicing. The interaction with the 5' splice-site seems to precede base-pairing between the pre-mRNA and the U1 snRNA. Stimulates commitment or early (E) complex formation by stabilizing the base pairing of the 5' end of the U1 snRNA and the 5' splice-site region. The sequence is that of U1 small nuclear ribonucleoprotein C from Fusarium vanettenii (strain ATCC MYA-4622 / CBS 123669 / FGSC 9596 / NRRL 45880 / 77-13-4) (Fusarium solani subsp. pisi).